Here is a 243-residue protein sequence, read N- to C-terminus: Pyridoxine 5'-phosphate synthase (243 aa).

Residue Asn-9 participates in 3-amino-2-oxopropyl phosphate binding. 11 to 12 (DH) contacts 1-deoxy-D-xylulose 5-phosphate. Position 20 (Arg-20) interacts with 3-amino-2-oxopropyl phosphate. His-45 functions as the Proton acceptor in the catalytic mechanism. Residues Arg-47 and His-52 each coordinate 1-deoxy-D-xylulose 5-phosphate. Glu-72 acts as the Proton acceptor in catalysis. Thr-102 contributes to the 1-deoxy-D-xylulose 5-phosphate binding site. The active-site Proton donor is the His-193. 3-amino-2-oxopropyl phosphate contacts are provided by residues Gly-194 and 215 to 216 (GH).

It belongs to the PNP synthase family. In terms of assembly, homooctamer; tetramer of dimers.

It localises to the cytoplasm. It catalyses the reaction 3-amino-2-oxopropyl phosphate + 1-deoxy-D-xylulose 5-phosphate = pyridoxine 5'-phosphate + phosphate + 2 H2O + H(+). The protein operates within cofactor biosynthesis; pyridoxine 5'-phosphate biosynthesis; pyridoxine 5'-phosphate from D-erythrose 4-phosphate: step 5/5. Its function is as follows. Catalyzes the complicated ring closure reaction between the two acyclic compounds 1-deoxy-D-xylulose-5-phosphate (DXP) and 3-amino-2-oxopropyl phosphate (1-amino-acetone-3-phosphate or AAP) to form pyridoxine 5'-phosphate (PNP) and inorganic phosphate. This chain is Pyridoxine 5'-phosphate synthase, found in Shigella dysenteriae serotype 1 (strain Sd197).